The primary structure comprises 423 residues: Osteomodulin (423 aa).

An N-terminal signal peptide occupies residues 1-20 (MGFLSPIYVLFFCFGVRVYC). 6 positions are modified to sulfotyrosine: Tyr-22, Tyr-25, Tyr-31, Tyr-39, Tyr-51, and Tyr-77. In terms of domain architecture, LRRNT spans 53–91 (VPFYNNILGCAKECFCPTNFPTSMYCDNRKLKTIPIIPM). 11 LRR repeats span residues 92–113 (HIQQLNLQFNDIEAVTANSFIN), 116–129 (HLKEINLSHNKIKS), 142–164 (NLQQLHLEHNNLEEFPFPLPKSL), 165–184 (ERLLLGYNEISILPTNAMDG), 187–207 (NVTMLDLCYNHLSDSMLKEKT), 213–233 (KLMQLNLCNNRLESMPLGLPS), 234–255 (SLMYLSLENNSISSIPDNYFDK), 258–279 (KLHALRISHNKLEDIPYDIFNL), 281–294 (NLIELNVGHNKLKQ), 301–322 (NLEHLYLQNNEIESINVTMICP), and 331–353 (HLTYLRVDQNKLKEPISSYIFFC). Asn-113 and Asn-121 each carry an N-linked (GlcNAc...) asparagine glycan. Asn-187 carries an N-linked (GlcNAc...) asparagine glycan. N-linked (GlcNAc...) asparagine glycosylation is found at Asn-242 and Asn-278. N-linked (GlcNAc...) asparagine glycosylation is present at Asn-316. Residues Cys-321 and Cys-353 are joined by a disulfide bond. Residues 381–406 (RSYQEEEEEDDHDSQDNTLEGQEVSD) are disordered. 2 positions are modified to sulfotyrosine: Tyr-413 and Tyr-414.

It belongs to the small leucine-rich proteoglycan (SLRP) family. SLRP class II subfamily. As to quaternary structure, binds the alpha(V)beta(3)-integrin. In terms of processing, glycosylated; contains keratan sulfate. Bone specific.

It localises to the secreted. The protein localises to the extracellular space. Its subcellular location is the extracellular matrix. Functionally, may be implicated in biomineralization processes. Has a function in binding of osteoblasts via the alpha(V)beta(3)-integrin. The chain is Osteomodulin (Omd) from Mus musculus (Mouse).